Consider the following 590-residue polypeptide: UvrABC system protein C (590 aa).

In terms of domain architecture, GIY-YIG spans 14–91 (DQPGCYLMKD…IKKHDPKYNV (78 aa)). Positions 196-231 (NEVKKELEEKMHEAAENLEFERAKELRDQIAHIEST) constitute a UVR domain.

The protein belongs to the UvrC family. As to quaternary structure, interacts with UvrB in an incision complex.

It localises to the cytoplasm. The UvrABC repair system catalyzes the recognition and processing of DNA lesions. UvrC both incises the 5' and 3' sides of the lesion. The N-terminal half is responsible for the 3' incision and the C-terminal half is responsible for the 5' incision. The sequence is that of UvrABC system protein C from Bacillus subtilis (strain 168).